Reading from the N-terminus, the 359-residue chain is Trans-enoyl reductase mpsG (359 aa).

Residues tyrosine 212, leucine 259, and threonine 278 each coordinate NADP(+).

It belongs to the zinc-containing alcohol dehydrogenase family. In terms of assembly, monomer.

It participates in secondary metabolite biosynthesis. Functionally, trans-enoyl reductase; part of the gene cluster that mediates the biosynthesis of macrophasetins, 3-decalinoyltetramic acids (DTAs) which feature a tetramate (pyrrolidine-2,4-dione) unit connected to a decalin fragment and that have potent bioactivities. The PKS-NRPS mpsA together with its associated enoylreductase partner mpsG incorporate one unit of acetyl-CoA, seven units of malonyl-CoA, and one unit of L-alanine to assemble the linear tetramic acid intermediate corresponding to the backbone of macrophasetins. Without the Diels-Alderase mpsD, the mpsA/G product can undergo the non-enzymatic intramolecular Diels-Alder (IMDA) reaction to generate both macrophasetin A and macrophasetin B. Catalyzed by mpsD, the linear tetramic acid intermediate is thoroughly converted to macrophasetin A via the endo-IMDA reaction in a regioselective and stereoselective manner. Finally, the cytochrome P450 monooxygenase mpsF catalyzes the hydroxylation at C20 to yield the end product macrophasetin C. The chain is Trans-enoyl reductase mpsG from Macrophomina phaseolina (strain MS6) (Charcoal rot fungus).